The primary structure comprises 5088 residues: Replicase polyprotein 1ab (5088 aa).

A helical membrane pass occupies residues 26–46; sequence VTNVIQYWTPILTMLLLAIYI. The disordered stretch occupies residues 301–323; sequence EIEDDTEAEETQKTKRKGKLQPQ. A run of 5 helical transmembrane segments spans residues 343-363, 1132-1152, 1156-1176, 1201-1221, and 1250-1270; these read HLTF…MSPT, GLFL…AITI, TMMM…HLLL, YGCL…LAYI, and ILIP…VSYV. Residues His-1434 and Cys-1539 each act as for 3C-like proteinase in the active site. The next 2 membrane-spanning stretches (helical) occupy residues 1729 to 1749 and 1758 to 1778; these read FTHT…LFFV and ILSS…YGLV. The interval 3093–3112 is disordered; that stretch reads KPNCPMVPSEVPVRNKHKSA. The ExoN domain occupies 4351–4616; sequence MNIVMDDCIC…MTQCIYQSFV (266 aa). Active-site residues include Asp-4362, Glu-4364, and Asp-4481. Positions 4498, 4504, 4522, and 4525 each coordinate Zn(2+). Catalysis depends on residues His-4599, Asp-4604, Lys-4880, Asp-4969, Lys-4998, and Glu-5035. Residues 4844–5088 enclose the Nidovirus-type SAM-dependent 2'-O-MTase domain; the sequence is LNNHAALAKA…RQSVFRYSPK (245 aa).

In terms of assembly, homodimer. Post-translationally, specific enzymatic cleavages in vivo by its own protease yield mature proteins. 3CL-PRO is autocatalytically processed.

The protein resides in the membrane. The catalysed reaction is a 5'-end (5'-triphosphoguanosine)-ribonucleoside in mRNA + S-adenosyl-L-methionine = a 5'-end (N(7)-methyl 5'-triphosphoguanosine)-ribonucleoside in mRNA + S-adenosyl-L-homocysteine. It carries out the reaction RNA(n) + a ribonucleoside 5'-triphosphate = RNA(n+1) + diphosphate. It catalyses the reaction ATP + H2O = ADP + phosphate + H(+). The enzyme catalyses a 5'-end (N(7)-methyl 5'-triphosphoguanosine)-ribonucleoside in mRNA + S-adenosyl-L-methionine = a 5'-end (N(7)-methyl 5'-triphosphoguanosine)-(2'-O-methyl-ribonucleoside) in mRNA + S-adenosyl-L-homocysteine + H(+). In terms of biological role, cysteine protease responsible for the majority of cleavages of the polyprotein. Recognizes substrates containing the core sequence [NT]-[EHKQSY]-|-[AGNST]. The helicase which contains a zinc finger structure displays RNA and DNA duplex-unwinding activities with 5' to 3' polarity. Its function is as follows. RNA-directed RNA polymerase that catalyzes the transcription of viral genomic and subgenomic RNAs. Functionally, catalyzes the RNA N7-guanylyltransferase reaction to methylate the core cap structure GpppN-RNA into the type-0 cap (m)GpppN-RNA. The sequence is that of Replicase polyprotein 1ab from Ochlerotatus harrisoni (CAVV).